The primary structure comprises 493 residues: UDP-N-acetylmuramoyl-L-alanyl-D-glutamate--2,6-diaminopimelate ligase (493 aa).

S31 provides a ligand contact to UDP-N-acetyl-alpha-D-muramoyl-L-alanyl-D-glutamate. 111-117 (GTNGKTT) contacts ATP. UDP-N-acetyl-alpha-D-muramoyl-L-alanyl-D-glutamate contacts are provided by residues N152, 153–154 (TT), S180, and R188. K220 is modified (N6-carboxylysine). Meso-2,6-diaminopimelate contacts are provided by residues R386, 410-413 (DNPR), G462, and E466. The Meso-diaminopimelate recognition motif motif lies at 410 to 413 (DNPR).

It belongs to the MurCDEF family. MurE subfamily. The cofactor is Mg(2+). Post-translationally, carboxylation is probably crucial for Mg(2+) binding and, consequently, for the gamma-phosphate positioning of ATP.

It localises to the cytoplasm. It carries out the reaction UDP-N-acetyl-alpha-D-muramoyl-L-alanyl-D-glutamate + meso-2,6-diaminopimelate + ATP = UDP-N-acetyl-alpha-D-muramoyl-L-alanyl-gamma-D-glutamyl-meso-2,6-diaminopimelate + ADP + phosphate + H(+). It participates in cell wall biogenesis; peptidoglycan biosynthesis. In terms of biological role, catalyzes the addition of meso-diaminopimelic acid to the nucleotide precursor UDP-N-acetylmuramoyl-L-alanyl-D-glutamate (UMAG) in the biosynthesis of bacterial cell-wall peptidoglycan. This chain is UDP-N-acetylmuramoyl-L-alanyl-D-glutamate--2,6-diaminopimelate ligase (murE1), found in Oceanobacillus iheyensis (strain DSM 14371 / CIP 107618 / JCM 11309 / KCTC 3954 / HTE831).